Here is a 1068-residue protein sequence, read N- to C-terminus: Protein AF-10 (1068 aa).

A PHD-type 1 zinc finger spans residues 22–74; the sequence is IGGCCVCSDERGWAENPLVYCDGHGCSVAVHQACYGIVQVPTGPWFCRKCESQ. The C2HC pre-PHD-type zinc finger occupies 79–112; sequence RVRCELCPHKDGALKRTDNGGWAHVVCALYIPEV. Positions 106-190 are required for interaction with histone H3; it reads ALYIPEVQFA…EGNGADNVQY (85 aa). The PHD-type 2 zinc-finger motif lies at 135–198; sequence KTCYICDEQG…QYCGYCKYHF (64 aa). The tract at residues 207–260 is disordered; that stretch reads GSNRSYEQSLSDSSSHSQDKHHEKEKKKYKEKDKHKQKHKKQPEPSPALVPSLT. Position 217 is a phosphoserine (Ser-217). Positions 223–240 are enriched in basic and acidic residues; that stretch reads SQDKHHEKEKKKYKEKDK. A Phosphoserine modification is found at Ser-252. Lys-280 participates in a covalent cross-link: Glycyl lysine isopeptide (Lys-Gly) (interchain with G-Cter in SUMO2). The segment covering 296-305 has biased composition (polar residues); sequence EVSAHTSSGK. Disordered stretches follow at residues 296-416 and 428-506; these read EVSA…SFSS and SQPK…SVAS. Over residues 306–317 the composition is skewed to basic and acidic residues; sequence DVSEARGSEGKG. The segment covering 340–351 has biased composition (polar residues); sequence TAVSASSPFPQG. Residues 352 to 372 are compositionally biased toward low complexity; that stretch reads SFSGTPGSVKSSSGSSVQSPQ. 3 stretches are compositionally biased toward polar residues: residues 387–396, 404–416, and 428–446; these read YTHTQQPSST, SGSQ…SFSS, and SQPK…SSLP. Position 436 is a phosphoserine (Ser-436). Residues 465–483 show a composition bias toward basic residues; the sequence is EKKRKGNKQSKHGPGRPKG. The segment covering 490-506 has biased composition (low complexity); that stretch reads VSHLSVSSASPTSSVAS. Phosphoserine is present on Ser-532. The segment covering 583–594 has biased composition (low complexity); it reads SGSGSSTPVSSS. 2 disordered regions span residues 583–613 and 660–698; these read SGSG…LSPS and SESS…NLQL. Residues 595–604 show a composition bias toward polar residues; sequence HIPQQSSGHL. A compositionally biased stretch (low complexity) spans 681 to 692; that stretch reads SSPRGSLSPRSP. Ser-686, Ser-688, and Ser-691 each carry phosphoserine. Residues 752–780 are leucine-zipper; sequence LQVENRRLEEQIKNLTAKKERLQLLNAQL. 2 disordered regions span residues 786–869 and 1040–1068; these read AITT…VSGV and PFLT…QEKS. Residues 787–816 show a composition bias toward polar residues; the sequence is ITTNPSPSHQMHTYTAQTAPPPDSLNSSKS. Composition is skewed to low complexity over residues 836–850 and 857–869; these read LTSS…SALS and QSPA…VSGV. Positions 1040–1054 are enriched in polar residues; it reads PFLTIHGDSTSQKVT.

Self-associates. Interacts with FSTL3; the interaction enhances MLLT10 in vitro transcriptional activity and self-association. Interacts with YEATS4. Interacts with SS18. Interacts with DOT1L. Interacts with histone H3; interaction is necessary for MLLT10 binding to nucleosomes; interaction is inhibited by histone H3 'Lys-27' methylations (H3K27me1, H3K27me2 and H3K27me3) amd acetylation; interaction stabilizes association of MLLT10 at chromatin; interaction is essential for histone H3 'Lys-79' dimethylation (H3K79me2).

The protein resides in the nucleus. Probably involved in transcriptional regulation. Binds to cruciform DNA. In cells, binding to unmodified histone H3 regulates DOT1L functions including histone H3 'Lys-79' dimethylation (H3K79me2) and gene activation. The sequence is that of Protein AF-10 from Mus musculus (Mouse).